The sequence spans 246 residues: Large ribosomal subunit protein uL30 (246 aa).

N-acetylmethionine is present on methionine 1. Repeat copies occupy residues 7 to 17 (KKVPSVPESLL), 18 to 28 (KRRQAYAAAKA), 29 to 40 (KRLKRLLAQKKF), and 41 to 52 (RKAQRKIIYERA). The interval 7–52 (KKVPSVPESLLKRRQAYAAAKAKRLKRLLAQKKFRKAQRKIIYERA) is 4 X 12 AA tandem repeats.

The protein belongs to the universal ribosomal protein uL30 family. As to quaternary structure, component of the large ribosomal subunit.

Its subcellular location is the cytoplasm. In terms of biological role, component of the large ribosomal subunit. The ribosome is a large ribonucleoprotein complex responsible for the synthesis of proteins in the cell. Binds to G-rich structures in 28S rRNA and in mRNAs. Plays a regulatory role in the translation apparatus; inhibits cell-free translation of mRNAs. In Gallus gallus (Chicken), this protein is Large ribosomal subunit protein uL30 (RPL7).